The following is a 62-amino-acid chain: Potassium channel toxin alpha-KTx 10.1 (62 aa).

The first 22 residues, 1-22 (MEGIAKITLILLFLFVTMHTFA), serve as a signal peptide directing secretion. Residues 23–28 (NWNTEA) constitute a propeptide that is removed on maturation. Disulfide bonds link Cys31/Cys50, Cys36/Cys55, and Cys40/Cys57. Tyr60 carries the tyrosine amide modification.

Belongs to the short scorpion toxin superfamily. Potassium channel inhibitor family. Alpha-KTx 10 subfamily. In terms of tissue distribution, expressed by the venom gland.

It localises to the secreted. Its function is as follows. Blocks Shaker B (Sh) and voltage-gated potassium-channels Kv1.1/KCNA1, Kv1.2/KCNA2, Kv1.3/KCNA3. Also inhibits small conductance calcium-activated potassium channels (KCNN) and intermediate conductance calcium-activated potassium channel (KCa3.1/KCNN4). In Centruroides noxius (Mexican scorpion), this protein is Potassium channel toxin alpha-KTx 10.1.